Reading from the N-terminus, the 486-residue chain is Glutamate--tRNA ligase 1 (486 aa).

The 'HIGH' region signature appears at 9 to 19; the sequence is PSPTGMLHIGG. Residues 259–263 carry the 'KMSKS' region motif; sequence KLSKR. Lys262 lines the ATP pocket.

The protein belongs to the class-I aminoacyl-tRNA synthetase family. Glutamate--tRNA ligase type 1 subfamily. As to quaternary structure, monomer.

The protein resides in the cytoplasm. It carries out the reaction tRNA(Glu) + L-glutamate + ATP = L-glutamyl-tRNA(Glu) + AMP + diphosphate. In terms of biological role, catalyzes the attachment of glutamate to tRNA(Glu) in a two-step reaction: glutamate is first activated by ATP to form Glu-AMP and then transferred to the acceptor end of tRNA(Glu). The sequence is that of Glutamate--tRNA ligase 1 from Hyphomonas neptunium (strain ATCC 15444).